Consider the following 1327-residue polypeptide: Vascular endothelial growth factor receptor 1 (1327 aa).

Residues Met-1 to Gly-24 form the signal peptide. Over Ser-25–Leu-749 the chain is Extracellular. 7 consecutive Ig-like C2-type domains span residues Pro-30–Tyr-121, Val-120–Thr-222, Asp-227–Ile-323, Asn-331–Thr-417, Pro-424–Ser-545, Pro-552–Ser-644, and Pro-651–Thr-737. N-linked (GlcNAc...) asparagine glycosylation is found at Asn-48, Asn-73, Asn-82, Asn-98, and Asn-125. A disulfide bond links Cys-51 and Cys-105. The cysteines at positions 154 and 203 are disulfide-linked. The N-linked (GlcNAc...) asparagine glycan is linked to Asn-247. An intrachain disulfide couples Cys-248 to Cys-307. N-linked (GlcNAc...) asparagine glycosylation is found at Asn-319, Asn-383, Asn-398, Asn-409, Asn-413, Asn-470, Asn-512, Asn-543, Asn-593, Asn-615, and Asn-663. Cys-450 and Cys-531 are joined by a disulfide. Cys-573 and Cys-626 are joined by a disulfide. A disulfide bridge connects residues Cys-672 and Cys-721. Residues Ile-750–Ile-770 form a helical membrane-spanning segment. Residues Arg-771–Ile-1327 are Cytoplasmic-facing. One can recognise a Protein kinase domain in the interval Leu-819 to Leu-1151. Residues Leu-825–Val-833 and Lys-853 each bind ATP. A disordered region spans residues Ala-950 to Asp-971. Residues Ser-951–Ser-961 are compositionally biased toward low complexity. The active-site Proton acceptor is the Asp-1015. Phosphotyrosine; by autocatalysis occurs at positions 1046, 1162, 1202, 1231, 1316, and 1322.

It belongs to the protein kinase superfamily. Tyr protein kinase family. CSF-1/PDGF receptor subfamily. Interacts with VEGFA, VEGFB and PGF. Monomer in the absence of bound VEGFA, VEGFB or PGF. Homodimer in the presence of bound VEGFA, VEGFB and PGF. Autophosphorylated on tyrosine residues upon ligand binding.

Its subcellular location is the cell membrane. It is found in the endosome. The protein resides in the secreted. The enzyme catalyses L-tyrosyl-[protein] + ATP = O-phospho-L-tyrosyl-[protein] + ADP + H(+). Its activity is regulated as follows. Present in an inactive conformation in the absence of bound ligand. Binding of VEGFA, VEGFB or PGF leads to dimerization and activation by autophosphorylation on tyrosine residues. Tyrosine-protein kinase that acts as a cell-surface receptor for VEGFA, VEGFB and PGF, and plays an essential role in the regulation of angiogenesis, cell survival, cell migration, macrophage function, and chemotaxis. Acts as a positive regulator of postnatal retinal hyaloid vessel regression. Has very high affinity for VEGFA and relatively low protein kinase activity; may function as a negative regulator of VEGFA signaling by limiting the amount of free VEGFA and preventing its binding to KDR. Ligand binding leads to the activation of several signaling cascades. Activation of PLCG1 leads to the production of the cellular signaling molecules diacylglycerol and inositol 1,4,5-trisphosphate and the activation of protein kinase C. Mediates phosphorylation of PIK3R1, the regulatory subunit of phosphatidylinositol 3-kinase, leading to activation of phosphatidylinositol kinase and the downstream signaling pathway. Mediates activation of MAPK1/ERK2, MAPK3/ERK1 and the MAP kinase signaling pathway, as well as of the AKT1 signaling pathway. Phosphorylates PLCG1. Promotes phosphorylation of AKT1 and CBL. The polypeptide is Vascular endothelial growth factor receptor 1 (FLT1) (Gallus gallus (Chicken)).